The sequence spans 78 residues: cAMP-dependent protein kinase inhibitor beta (78 aa).

Residues 1-10 (MRTDSSKMTD) show a composition bias toward basic and acidic residues. Residues 1-78 (MRTDSSKMTD…QLEKPQNEEK (78 aa)) are disordered. The segment covering 33–42 (IQSSAATDGT) has biased composition (polar residues). Positions 53–78 (SVKEDAKEKDEKTTQDQLEKPQNEEK) are enriched in basic and acidic residues.

It belongs to the PKI family.

Extremely potent competitive inhibitor of cAMP-dependent protein kinase activity, this protein interacts with the catalytic subunit of the enzyme after the cAMP-induced dissociation of its regulatory chains. The sequence is that of cAMP-dependent protein kinase inhibitor beta (PKIB) from Homo sapiens (Human).